Reading from the N-terminus, the 229-residue chain is Urease accessory protein UreF (229 aa).

This sequence belongs to the UreF family. In terms of assembly, ureD, UreF and UreG form a complex that acts as a GTP-hydrolysis-dependent molecular chaperone, activating the urease apoprotein by helping to assemble the nickel containing metallocenter of UreC. The UreE protein probably delivers the nickel.

Its subcellular location is the cytoplasm. Functionally, required for maturation of urease via the functional incorporation of the urease nickel metallocenter. This Staphylococcus aureus (strain bovine RF122 / ET3-1) protein is Urease accessory protein UreF.